The following is a 267-amino-acid chain: NAD kinase 2 (267 aa).

Residue aspartate 52 is the Proton acceptor of the active site. Residues 52–53 (DG), 124–125 (NE), arginine 151, aspartate 153, 164–169 (TGYNKS), and alanine 188 contribute to the NAD(+) site.

The protein belongs to the NAD kinase family. A divalent metal cation serves as cofactor.

It is found in the cytoplasm. The enzyme catalyses NAD(+) + ATP = ADP + NADP(+) + H(+). Involved in the regulation of the intracellular balance of NAD and NADP, and is a key enzyme in the biosynthesis of NADP. Catalyzes specifically the phosphorylation on 2'-hydroxyl of the adenosine moiety of NAD to yield NADP. In Geobacillus kaustophilus (strain HTA426), this protein is NAD kinase 2.